The sequence spans 818 residues: Rho GTPase-activating protein 44 (818 aa).

The region spanning 14–249 is the BAR domain; that stretch reads QTVGRAEKTE…IKAQQEAWVE (236 aa). The Rho-GAP domain maps to 255–445; it reads KPLEEHLTIS…PIIQHADWFF (191 aa). Disordered stretches follow at residues 467 to 493, 530 to 772, and 789 to 818; these read ANYSSMPSPDMDPADRRQPEQARRPLS, SSAG…SMST, and TLRLSPLEHMRRHSVTDKRDSEEESESTAL. The segment covering 479-489 has biased composition (basic and acidic residues); the sequence is PADRRQPEQAR. Ser-493 is modified (phosphoserine). The segment covering 563 to 579 has biased composition (low complexity); sequence QPLDSPAAPALSPSGLG. The segment covering 598 to 611 has biased composition (polar residues); it reads GSAQKGSPGSSQGT. Composition is skewed to low complexity over residues 614-641 and 688-708; these read AGTQPGAQPGAQPGASPSPSQPPADQSP and SPYGLSYPQGYSLASGQLSPA. Residues 731 to 818 form an interaction with BST2 region; that stretch reads KPRQRPTLPP…SEEESESTAL (88 aa). Polar residues predominate over residues 746-757; sequence VNLSASSPQSTE. The short motif at 764 to 767 is the PDZ-binding element; it reads MSPG. Positions 794 to 809 are enriched in basic and acidic residues; that stretch reads PLEHMRRHSVTDKRDS. A Phosphoserine modification is found at Ser-809. The PDZ-binding motif lies at 815-818; the sequence is STAL.

In terms of assembly, interacts with BST2 (via cytoplasmic domain). Interacts (probably via PDZ-binding motif) with SHANK3 (via PDZ domain); the interaction takes place in dendritic spines and promotes GRIA1 exocytosis. As to expression, highly expressed in brain. Expressed at weak level in other tissues.

Its subcellular location is the cell projection. The protein localises to the dendritic spine. The protein resides in the recycling endosome. It is found in the presynapse. It localises to the dendrite. Functionally, GTPase-activating protein (GAP) that stimulates the GTPase activity of Rho-type GTPases. Thereby, controls Rho-type GTPases cycling between their active GTP-bound and inactive GDP-bound states. Acts as a GAP at least for CDC42 and RAC1. In neurons, is involved in dendritic spine formation and synaptic plasticity in a specific RAC1-GAP activity. Limits the initiation of exploratory dendritic filopodia. Recruited to actin-patches that seed filopodia, binds specifically to plasma membrane sections that are deformed inward by acto-myosin mediated contractile forces. Acts through GAP activity on RAC1 to reduce actin polymerization necessary for filopodia formation. In association with SHANK3, promotes GRIA1 exocytosis from recycling endosomes and spine morphological changes associated to long-term potentiation. The sequence is that of Rho GTPase-activating protein 44 from Homo sapiens (Human).